Here is a 403-residue protein sequence, read N- to C-terminus: Acetylornithine aminotransferase (403 aa).

Residues Gly-107–Ala-108 and Phe-140 contribute to the pyridoxal 5'-phosphate site. Arg-143 serves as a coordination point for N(2)-acetyl-L-ornithine. Asp-225–Gln-228 contacts pyridoxal 5'-phosphate. The residue at position 254 (Lys-254) is an N6-(pyridoxal phosphate)lysine. Residue Ser-282 coordinates N(2)-acetyl-L-ornithine. Residue Thr-283 participates in pyridoxal 5'-phosphate binding.

This sequence belongs to the class-III pyridoxal-phosphate-dependent aminotransferase family. ArgD subfamily. In terms of assembly, homodimer. Pyridoxal 5'-phosphate serves as cofactor.

The protein resides in the cytoplasm. The enzyme catalyses N(2)-acetyl-L-ornithine + 2-oxoglutarate = N-acetyl-L-glutamate 5-semialdehyde + L-glutamate. Its pathway is amino-acid biosynthesis; L-arginine biosynthesis; N(2)-acetyl-L-ornithine from L-glutamate: step 4/4. The protein is Acetylornithine aminotransferase of Vibrio vulnificus (strain YJ016).